The primary structure comprises 277 residues: MGIRKHKPTTPGRRGSSVSDFAEITRSEPEKSLLRPLHGRGGRNAHGKITTRHKGGGHKRAYRLIDFRRNDKDGVPAKVAHIEYDPNRSARIALLHYADGEKRYIIAPNNVRQGDRIESGARADIKPGNNLPLRNIPTGTVVHAIELRPGGGAKIARSAGARVQLVAKDGPYAQLRMPSGEIRNVDARCRATVGEVGNSEHANINWGKAGRMRWKGKRPTVRGVVMNPVDHPHGGGEGKTSGGRHPVNPKGKPEGRTRRNKPSDKLIVRRRRTGKKR.

Disordered stretches follow at residues 1-58 (MGIR…GGGH) and 223-277 (GVVM…GKKR). The segment covering 23–33 (EITRSEPEKSL) has biased composition (basic and acidic residues). Basic residues predominate over residues 37–58 (LHGRGGRNAHGKITTRHKGGGH). Positions 251-267 (GKPEGRTRRNKPSDKLI) are enriched in basic and acidic residues. A compositionally biased stretch (basic residues) spans 268–277 (VRRRRTGKKR).

This sequence belongs to the universal ribosomal protein uL2 family. As to quaternary structure, part of the 50S ribosomal subunit. Forms a bridge to the 30S subunit in the 70S ribosome.

One of the primary rRNA binding proteins. Required for association of the 30S and 50S subunits to form the 70S ribosome, for tRNA binding and peptide bond formation. It has been suggested to have peptidyltransferase activity; this is somewhat controversial. Makes several contacts with the 16S rRNA in the 70S ribosome. The protein is Large ribosomal subunit protein uL2 of Saccharopolyspora erythraea (strain ATCC 11635 / DSM 40517 / JCM 4748 / NBRC 13426 / NCIMB 8594 / NRRL 2338).